A 318-amino-acid polypeptide reads, in one-letter code: uncharacterized protein (318 aa).

The interval 19–63 (VPPDARHHEPRPGMTDHPDTGNGIGLTGRPPRAIPDPAPRSSHGP) is disordered. The segment covering 21-37 (PDARHHEPRPGMTDHPD) has biased composition (basic and acidic residues). Residue 72 to 79 (QKGGVGKT) coordinates ATP.

Belongs to the ParA family.

May play a role in septum formation. This is an uncharacterized protein from Mycobacterium tuberculosis (strain CDC 1551 / Oshkosh).